Here is a 493-residue protein sequence, read N- to C-terminus: Protein nucleotidyltransferase YdiU (493 aa).

ATP contacts are provided by G94, G96, R97, K117, D129, G130, R180, and R187. The Proton acceptor role is filled by D256. Positions 257 and 266 each coordinate Mg(2+). D266 is an ATP binding site.

This sequence belongs to the SELO family. Mg(2+) is required as a cofactor. The cofactor is Mn(2+).

The catalysed reaction is L-seryl-[protein] + ATP = 3-O-(5'-adenylyl)-L-seryl-[protein] + diphosphate. It carries out the reaction L-threonyl-[protein] + ATP = 3-O-(5'-adenylyl)-L-threonyl-[protein] + diphosphate. The enzyme catalyses L-tyrosyl-[protein] + ATP = O-(5'-adenylyl)-L-tyrosyl-[protein] + diphosphate. It catalyses the reaction L-histidyl-[protein] + UTP = N(tele)-(5'-uridylyl)-L-histidyl-[protein] + diphosphate. The catalysed reaction is L-seryl-[protein] + UTP = O-(5'-uridylyl)-L-seryl-[protein] + diphosphate. It carries out the reaction L-tyrosyl-[protein] + UTP = O-(5'-uridylyl)-L-tyrosyl-[protein] + diphosphate. Its function is as follows. Nucleotidyltransferase involved in the post-translational modification of proteins. It can catalyze the addition of adenosine monophosphate (AMP) or uridine monophosphate (UMP) to a protein, resulting in modifications known as AMPylation and UMPylation. The chain is Protein nucleotidyltransferase YdiU from Hahella chejuensis (strain KCTC 2396).